We begin with the raw amino-acid sequence, 147 residues long: Hemoglobin subunit beta (147 aa).

Residues 3 to 147 (EWTDDERAII…VVSALGRQYH (145 aa)) form the Globin domain. Residues His64 and His93 each contribute to the heme b site.

It belongs to the globin family. As to quaternary structure, heterotetramer of two alpha chains and two beta chains. Red blood cells.

In terms of biological role, involved in oxygen transport from gills to the various peripheral tissues. This is Hemoglobin subunit beta (hbb) from Melanogrammus aeglefinus (Haddock).